Reading from the N-terminus, the 71-residue chain is Beta-defensin 124 (71 aa).

A signal peptide spans 1-22 (MTQLLLFLVALLVLGHVPSGRS). 3 disulfides stabilise this stretch: Cys27/Cys54, Cys34/Cys48, and Cys38/Cys55.

Belongs to the beta-defensin family.

The protein resides in the secreted. Its function is as follows. Has antibacterial activity. The polypeptide is Beta-defensin 124 (DEFB124) (Pan troglodytes (Chimpanzee)).